A 95-amino-acid chain; its full sequence is Small ribosomal subunit protein bS6 (95 aa).

It belongs to the bacterial ribosomal protein bS6 family.

Binds together with bS18 to 16S ribosomal RNA. In Clostridium perfringens (strain ATCC 13124 / DSM 756 / JCM 1290 / NCIMB 6125 / NCTC 8237 / Type A), this protein is Small ribosomal subunit protein bS6.